The following is a 126-amino-acid chain: Probable prefoldin subunit 4 (126 aa).

Belongs to the prefoldin subunit beta family. In terms of assembly, heterohexamer of two PFD-alpha type and four PFD-beta type subunits.

Binds specifically to cytosolic chaperonin (c-CPN) and transfers target proteins to it. Binds to nascent polypeptide chain and promotes folding in an environment in which there are many competing pathways for nonnative proteins. In Caenorhabditis elegans, this protein is Probable prefoldin subunit 4 (pfd-4).